Consider the following 96-residue polypeptide: Small ribosomal subunit protein bS6 (96 aa).

This sequence belongs to the bacterial ribosomal protein bS6 family.

In terms of biological role, binds together with bS18 to 16S ribosomal RNA. This Streptococcus suis (strain 98HAH33) protein is Small ribosomal subunit protein bS6.